A 122-amino-acid polypeptide reads, in one-letter code: Holo-[acyl-carrier-protein] synthase (122 aa).

Positions 8 and 56 each coordinate Mg(2+).

The protein belongs to the P-Pant transferase superfamily. AcpS family. It depends on Mg(2+) as a cofactor.

The protein localises to the cytoplasm. It catalyses the reaction apo-[ACP] + CoA = holo-[ACP] + adenosine 3',5'-bisphosphate + H(+). Functionally, transfers the 4'-phosphopantetheine moiety from coenzyme A to a Ser of acyl-carrier-protein. The protein is Holo-[acyl-carrier-protein] synthase of Salinispora arenicola (strain CNS-205).